The chain runs to 609 residues: Granule-bound starch synthase 1, chloroplastic/amyloplastic (609 aa).

The transit peptide at 1 to 77 (MSALTTSQLA…SRRFPSVVVY (77 aa)) directs the protein to the chloroplast. The interval 29–67 (RHGFQGLKPRSPAGGDATSLSVTTSARATPKQQRSVQRG) is disordered. Positions 46–66 (TSLSVTTSARATPKQQRSVQR) are enriched in polar residues. Lysine 97 contributes to the ADP-alpha-D-glucose binding site.

Belongs to the glycosyltransferase 1 family. Bacterial/plant glycogen synthase subfamily.

The protein localises to the plastid. The protein resides in the chloroplast. It localises to the amyloplast. The catalysed reaction is an NDP-alpha-D-glucose + [(1-&gt;4)-alpha-D-glucosyl](n) = [(1-&gt;4)-alpha-D-glucosyl](n+1) + a ribonucleoside 5'-diphosphate + H(+). It functions in the pathway glycan biosynthesis; starch biosynthesis. Required for the synthesis of amylose in endosperm. The protein is Granule-bound starch synthase 1, chloroplastic/amyloplastic (WAXY) of Oryza glaberrima (African rice).